The following is a 664-amino-acid chain: Transketolase 1 (664 aa).

Substrate is bound at residue histidine 26. Thiamine diphosphate is bound by residues histidine 66 and 114–116; that span reads GPL. Residue aspartate 155 participates in Mg(2+) binding. Positions 156 and 185 each coordinate thiamine diphosphate. Mg(2+) contacts are provided by asparagine 185 and isoleucine 187. Residues histidine 260, arginine 357, and serine 384 each coordinate substrate. Histidine 260 contacts thiamine diphosphate. Glutamate 411 (proton donor) is an active-site residue. Phenylalanine 437 contacts thiamine diphosphate. Positions 461, 469, and 520 each coordinate substrate.

Belongs to the transketolase family. In terms of assembly, homodimer. The cofactor is Mg(2+). Ca(2+) serves as cofactor. Mn(2+) is required as a cofactor. Requires Co(2+) as cofactor. It depends on thiamine diphosphate as a cofactor.

It catalyses the reaction D-sedoheptulose 7-phosphate + D-glyceraldehyde 3-phosphate = aldehydo-D-ribose 5-phosphate + D-xylulose 5-phosphate. Its function is as follows. Catalyzes the transfer of a two-carbon ketol group from a ketose donor to an aldose acceptor, via a covalent intermediate with the cofactor thiamine pyrophosphate. This chain is Transketolase 1 (tkt1), found in Vibrio vulnificus (strain CMCP6).